The sequence spans 330 residues: Ferredoxin--NADP reductase (330 aa).

FAD contacts are provided by glutamate 35, glutamine 43, tyrosine 48, valine 90, phenylalanine 123, aspartate 285, and threonine 326.

It belongs to the ferredoxin--NADP reductase type 2 family. In terms of assembly, homodimer. The cofactor is FAD.

It carries out the reaction 2 reduced [2Fe-2S]-[ferredoxin] + NADP(+) + H(+) = 2 oxidized [2Fe-2S]-[ferredoxin] + NADPH. The protein is Ferredoxin--NADP reductase of Streptococcus pyogenes serotype M6 (strain ATCC BAA-946 / MGAS10394).